The chain runs to 161 residues: MVMAMGFDTVVAAIMATAIIVAVAYTFLAGSTSIAELSVESYKDAVNSAVKKLRSDIEILSVSYDNSTSKIVAYFKNTGDERYPDFSEFDAIVYGRTSGGEMVSFYVNSTVFSITNELINPGIFDPQEVAKLEAVQPLQNGTYVLLICTPNAVCDSADFSV.

The first 35 residues, 1-35, serve as a signal peptide directing secretion; that stretch reads MVMAMGFDTVVAAIMATAIIVAVAYTFLAGSTSIA.

This is an uncharacterized protein from Archaeoglobus fulgidus (strain ATCC 49558 / DSM 4304 / JCM 9628 / NBRC 100126 / VC-16).